The chain runs to 61 residues: MSRTSLEVKAQRKPKFSARAYNRCPICGRPRAYLRKFGLCRICFRNMALRGELPGVRKSSW.

Zn(2+) is bound by residues Cys-24, Cys-27, Cys-40, and Cys-43.

The protein belongs to the universal ribosomal protein uS14 family. Zinc-binding uS14 subfamily. As to quaternary structure, part of the 30S ribosomal subunit. Contacts proteins S3 and S10. Zn(2+) serves as cofactor.

In terms of biological role, binds 16S rRNA, required for the assembly of 30S particles and may also be responsible for determining the conformation of the 16S rRNA at the A site. The protein is Small ribosomal subunit protein uS14 of Nitratidesulfovibrio vulgaris (strain ATCC 29579 / DSM 644 / CCUG 34227 / NCIMB 8303 / VKM B-1760 / Hildenborough) (Desulfovibrio vulgaris).